Consider the following 138-residue polypeptide: Basic phospholipase A2 Mtx-b (138 aa).

The first 16 residues, 1-16, serve as a signal peptide directing secretion; that stretch reads MRALWIVAVLLVGVEG. 7 disulfide bridges follow: cysteine 42–cysteine 131, cysteine 44–cysteine 60, cysteine 59–cysteine 111, cysteine 65–cysteine 138, cysteine 66–cysteine 104, cysteine 73–cysteine 97, and cysteine 91–cysteine 102. The Ca(2+) site is built by tyrosine 43, glycine 45, and glycine 47. Residue histidine 63 is part of the active site. Aspartate 64 contributes to the Ca(2+) binding site. Residue aspartate 105 is part of the active site.

Heterodimer of an acidic subunit and a basic chain. The acidic subunit is non-toxic, without enzymatic activity and comprises 3 peptides that are cross-linked by 7 disulfide bridges. The basic subunit is toxic, has phospholipase A2 activity and is composed of a single chain. Ca(2+) is required as a cofactor. Expressed by the venom gland.

It is found in the secreted. It catalyses the reaction a 1,2-diacyl-sn-glycero-3-phosphocholine + H2O = a 1-acyl-sn-glycero-3-phosphocholine + a fatty acid + H(+). Its function is as follows. Snake venom phospholipase A2 (PLA2) that inhibits neuromuscular transmission by blocking acetylcholine release from the nerve termini. PLA2 catalyzes the calcium-dependent hydrolysis of the 2-acyl groups in 3-sn-phosphoglycerides. The sequence is that of Basic phospholipase A2 Mtx-b from Crotalus scutulatus scutulatus (Mojave rattlesnake).